The primary structure comprises 212 residues: 2',3'-cyclic-nucleotide 3'-phosphodiesterase (212 aa).

The active-site Proton donor/acceptor is His51. Thr53 lines the substrate pocket. His146 acts as the Proton donor/acceptor in catalysis. Substrate contacts are provided by Ser148 and Tyr151.

The protein belongs to the 2H phosphoesterase superfamily. CPD1 family.

Its subcellular location is the golgi apparatus. The catalysed reaction is a nucleoside 2',3'-cyclic phosphate + H2O = a nucleoside 2'-phosphate + H(+). Involved in the metabolism of ADP-ribose 1',2'-cyclic phosphate which is produced as a consequence of tRNA splicing. This Neurospora crassa (strain ATCC 24698 / 74-OR23-1A / CBS 708.71 / DSM 1257 / FGSC 987) protein is 2',3'-cyclic-nucleotide 3'-phosphodiesterase (cpd-7).